A 568-amino-acid chain; its full sequence is UPF0313 protein FN0734 (568 aa).

In terms of domain architecture, Radical SAM core spans 289–562 (ALDTIKYSVT…KQKQKDIVTE (274 aa)). [4Fe-4S] cluster-binding residues include Cys303, Cys307, and Cys310. Residues 546–568 (VEKDNGKKQKQKDIVTEKRKNRK) are disordered.

This sequence belongs to the UPF0313 family. [4Fe-4S] cluster serves as cofactor.

The protein is UPF0313 protein FN0734 of Fusobacterium nucleatum subsp. nucleatum (strain ATCC 25586 / DSM 15643 / BCRC 10681 / CIP 101130 / JCM 8532 / KCTC 2640 / LMG 13131 / VPI 4355).